The primary structure comprises 205 residues: Protein phosphatase inhibitor 2 (205 aa).

A disordered region spans residues 1 to 44 (MAASTASHRPIKGILKNKTSTTSSVVASAEQPRRTVEEELSKKS). Position 2 is an N-acetylalanine (Ala2). The tract at residues 12 to 17 (KGILKN) is required for binding PPP1CC. The span at 19 to 29 (TSTTSSVVASA) shows a compositional bias: low complexity. Residues 31-44 (QPRRTVEEELSKKS) are compositionally biased toward basic and acidic residues. Residues 43 to 55 (KSQKWDEMNILAT) form a required for binding PPP1CC region. Ser44 is subject to Phosphoserine; by ATM. Position 73 is a phosphothreonine; by GSK3 (Thr73). Residues Ser87 and Ser89 each carry the phosphoserine modification. 2 positions are modified to phosphothreonine: Thr96 and Thr116. Positions 104–142 (LAAAEGSEPKFRTREQESSGEEDNDLSPEEREKKRQFEM) are disordered. The span at 110–120 (SEPKFRTREQE) shows a compositional bias: basic and acidic residues. Ser121, Ser122, and Ser130 each carry phosphoserine. The span at 121–130 (SSGEEDNDLS) shows a compositional bias: acidic residues. A compositionally biased stretch (basic and acidic residues) spans 131–142 (PEEREKKRQFEM). Residues 147-150 (HYNE) are required for binding PPP1CC catalytic center, displacing metal ions and inhibition of PPP1CC catalytic activity. Positions 163-205 (KDLHDDDEDEEMSETADADSMNIEESNQGSTAGDHLQHKSQSS) are disordered. Residues 167–179 (DDDEDEEMSETAD) show a composition bias toward acidic residues.

This sequence belongs to the protein phosphatase inhibitor 2 family. As to quaternary structure, heterodimer with PP1. In terms of processing, phosphorylation on Ser-44 by ATM activates PP1 by dissociating the PP1-PPP1R2 complex. Phosphorylation on Thr-73 by GSK3 activates PP1 by dissociating the PP1-PPP1R2 complex. As to expression, central nervous system.

Functionally, inhibitor of protein-phosphatase 1. The chain is Protein phosphatase inhibitor 2 (Ppp1r2) from Rattus norvegicus (Rat).